A 181-amino-acid chain; its full sequence is MGLQQEISLQPWCHHPAESCQTTTDMTERLSAEQIKEYKGVFEMFDEEGNGEVKTGELEWLMSLLGINPTKSELASMAKDVDRDNKGFFNCDGFLALMGVYHEKAQNQESELRAAFRVFDKEGKGYIDWNTLKYVLMNAGEPLNEVEAEQMMKEADKDGDRTIDYEEFVAMMTGESFKLIQ.

EF-hand domains are found at residues 33-68 (EQIK…LGIN), 69-104 (PTKS…YHEK), 107-142 (NQES…AGEP), and 143-178 (LNEV…ESFK). 5 residues coordinate Ca(2+): Asp156, Asp158, Asp160, Thr162, and Glu167.

This sequence belongs to the calmodulin family. Calglandulin subfamily. Expressed in prostate, thymus, heart, skeleton muscle, bone marrow and ovary.

Its subcellular location is the cytoplasm. The protein resides in the nucleus. This is Calmodulin-like protein 6 (CALML6) from Homo sapiens (Human).